The chain runs to 354 residues: Guanine nucleotide-binding protein G(i) subunit alpha-1 (354 aa).

Glycine 2 carries N-myristoyl glycine lipidation. A lipid anchor (S-palmitoyl cysteine) is attached at cysteine 3. The 323-residue stretch at arginine 32–phenylalanine 354 folds into the G-alpha domain. Residues lysine 35–threonine 48 are G1 motif. GTP-binding positions include glutamate 43 to threonine 48, aspartate 150 to serine 151, and leucine 175 to arginine 178. Serine 47 lines the Mg(2+) pocket. The G2 motif stretch occupies residues aspartate 173–threonine 181. Threonine 181 contributes to the Mg(2+) binding site. Residues phenylalanine 196–arginine 205 form a G3 motif region. GTP-binding positions include aspartate 200–glutamine 204, asparagine 269–aspartate 272, and alanine 326. A G4 motif region spans residues isoleucine 265–aspartate 272. A G5 motif region spans residues threonine 324–threonine 329.

It belongs to the G-alpha family. G(i/o/t/z) subfamily. In terms of assembly, heterotrimeric G proteins are composed of 3 units; alpha, beta and gamma. The alpha chain contains the guanine nucleotide binding site. Part of a spindle orientation complex at least composed of GNAI1, GPSM2 and NUMA1. Identified in complex with the beta subunit GNB1 and the gamma subunit GNG1. Identified in complex with the beta subunit GNB1 and the gamma subunit GNG2. Component of the TAS2R14-GNAI1 complex, consisting of TAS2R14, GNAI1, GNB1 and GNG2; within the complex interacts with TAS2R14; this complex plays a role in the perception of bitterness. GTP binding causes dissociation of the heterotrimer, liberating the individual subunits so that they can interact with downstream effector proteins. Interacts (GDP-bound form) with GPSM1; this inhibits guanine nucleotide exchange and GTP binding. Interacts (GDP-bound form) with GPSM2 (via GoLoco domains); this inhibits guanine nucleotide exchange. Interacts with RGS10; this strongly enhances GTP hydrolysis. Interacts with RGS1 and RGS16. Interacts with RGS4. Interacts with RGS12. Interacts (via active GTP- or inactive GDP-bound forms) with RGS14 (via RGS and GoLoco domains). Interacts with RGS3, RGS6, RGS7, RGS8, RGS17, RGS18 and RGS20 (in vitro). Interacts (GDP-bound form) with RIC8A (via C-terminus); promoting GNAI1 folding and association with the plasma membrane. Interacts (inactive GDP-bound form) with NUCB1 (via GBA motif); the interaction leads to activation of GNAI1. Interacts (inactive GDP-bound form) with CCDC88C/DAPLE (via GBA motif); the interaction leads to activation of GNAI1. Interacts (inactive GDP-bound form) with CCDC8A/GIV (via GBA motif). Interacts with GPR15. Myristoylation at Gly-2 is required for membrane anchoring before palmitoylation. Post-translationally, palmitoylation at Cys-3 varies with membrane lipid composition.

The protein resides in the nucleus. It localises to the cytoplasm. It is found in the cell membrane. The protein localises to the cytoskeleton. Its subcellular location is the microtubule organizing center. The protein resides in the centrosome. It localises to the cell cortex. It is found in the membrane. The enzyme catalyses GTP + H2O = GDP + phosphate + H(+). Functionally, guanine nucleotide-binding proteins (G proteins) function as transducers downstream of G protein-coupled receptors (GPCRs) in numerous signaling cascades. The alpha chain contains the guanine nucleotide binding site and alternates between an active, GTP-bound state and an inactive, GDP-bound state. Signaling by an activated GPCR promotes GDP release and GTP binding. The alpha subunit has a low GTPase activity that converts bound GTP to GDP, thereby terminating the signal. Both GDP release and GTP hydrolysis are modulated by numerous regulatory proteins. Signaling is mediated via effector proteins, such as adenylate cyclase. Inhibits adenylate cyclase activity of ADCY1, ADCY5 and ADCY6, leading to decreased intracellular cAMP levels. The inactive GDP-bound form prevents the association of RGS14 with centrosomes and is required for the translocation of RGS14 from the cytoplasm to the plasma membrane. Required for normal cytokinesis during mitosis. Required for cortical dynein-dynactin complex recruitment during metaphase. The protein is Guanine nucleotide-binding protein G(i) subunit alpha-1 (Gnai1) of Rattus norvegicus (Rat).